A 167-amino-acid chain; its full sequence is Large ribosomal subunit protein uL10 (167 aa).

The protein belongs to the universal ribosomal protein uL10 family. Part of the ribosomal stalk of the 50S ribosomal subunit. The N-terminus interacts with L11 and the large rRNA to form the base of the stalk. The C-terminus forms an elongated spine to which L12 dimers bind in a sequential fashion forming a multimeric L10(L12)X complex.

Functionally, forms part of the ribosomal stalk, playing a central role in the interaction of the ribosome with GTP-bound translation factors. The sequence is that of Large ribosomal subunit protein uL10 from Paraburkholderia phytofirmans (strain DSM 17436 / LMG 22146 / PsJN) (Burkholderia phytofirmans).